The following is a 213-amino-acid chain: Imidazole glycerol phosphate synthase subunit HisH (213 aa).

The region spanning 1–212 (MLAILDYKAG…HRYCTEAADA (212 aa)) is the Glutamine amidotransferase type-1 domain. The Nucleophile role is filled by Cys-79. Catalysis depends on residues His-187 and Glu-189.

As to quaternary structure, heterodimer of HisH and HisF.

It localises to the cytoplasm. The enzyme catalyses 5-[(5-phospho-1-deoxy-D-ribulos-1-ylimino)methylamino]-1-(5-phospho-beta-D-ribosyl)imidazole-4-carboxamide + L-glutamine = D-erythro-1-(imidazol-4-yl)glycerol 3-phosphate + 5-amino-1-(5-phospho-beta-D-ribosyl)imidazole-4-carboxamide + L-glutamate + H(+). The catalysed reaction is L-glutamine + H2O = L-glutamate + NH4(+). Its pathway is amino-acid biosynthesis; L-histidine biosynthesis; L-histidine from 5-phospho-alpha-D-ribose 1-diphosphate: step 5/9. Functionally, IGPS catalyzes the conversion of PRFAR and glutamine to IGP, AICAR and glutamate. The HisH subunit catalyzes the hydrolysis of glutamine to glutamate and ammonia as part of the synthesis of IGP and AICAR. The resulting ammonia molecule is channeled to the active site of HisF. This is Imidazole glycerol phosphate synthase subunit HisH from Nitratidesulfovibrio vulgaris (strain ATCC 29579 / DSM 644 / CCUG 34227 / NCIMB 8303 / VKM B-1760 / Hildenborough) (Desulfovibrio vulgaris).